The chain runs to 59 residues: Insulin (59 aa).

Intrachain disulfides connect Cys-7/Cys-45, Cys-19/Cys-58, and Cys-44/Cys-49.

The protein belongs to the insulin family. Heterodimer of a B chain and an A chain linked by two disulfide bonds.

It is found in the secreted. Functionally, insulin decreases blood glucose concentration. It increases cell permeability to monosaccharides, amino acids and fatty acids. It accelerates glycolysis, the pentose phosphate cycle, and glycogen synthesis in liver. In Chimaera monstrosa (Rabbit fish), this protein is Insulin (ins).